The sequence spans 1196 residues: Probable cation-transporting ATPase 13A4 (1196 aa).

The Cytoplasmic portion of the chain corresponds to Met-1 to Arg-31. Residues Lys-32 to Trp-52 lie within the membrane without spanning it. The Cytoplasmic portion of the chain corresponds to Arg-53–Leu-197. Residues Leu-198–Phe-218 form a helical membrane-spanning segment. At Ser-219–Lys-223 the chain is on the lumenal side. A helical transmembrane segment spans residues Glu-224–Leu-244. Residues Arg-245–Arg-400 lie on the Cytoplasmic side of the membrane. Residues Phe-401 to Val-421 traverse the membrane as a helical segment. The Lumenal portion of the chain corresponds to Leu-422 to Asp-436. The chain crosses the membrane as a helical span at residues Val-437 to Ala-457. Over Gln-458–Ser-900 the chain is Cytoplasmic. Residue Asp-486 is the 4-aspartylphosphate intermediate of the active site. Residues Asp-848 and Asp-852 each contribute to the Mg(2+) site. Residues Phe-901–Leu-921 form a helical membrane-spanning segment. Over Tyr-922 to Gln-932 the chain is Lumenal. The helical transmembrane segment at Phe-933 to Ala-953 threads the bilayer. The Cytoplasmic portion of the chain corresponds to Tyr-954–Leu-972. The chain crosses the membrane as a helical span at residues Leu-973 to Val-993. The Lumenal portion of the chain corresponds to Gln-994–Ser-1035. The chain crosses the membrane as a helical span at residues Phe-1036–Phe-1056. Residues Ser-1057–Tyr-1070 lie on the Cytoplasmic side of the membrane. The helical transmembrane segment at Ile-1071–Ile-1091 threads the bilayer. The Lumenal segment spans residues Pro-1092 to Ala-1109. Residues Ser-1110 to Ile-1130 form a helical membrane-spanning segment. Over Glu-1131 to Leu-1196 the chain is Cytoplasmic.

It belongs to the cation transport ATPase (P-type) (TC 3.A.3) family. Type V subfamily. In terms of tissue distribution, expressed in heart, placenta, liver, skeletal muscles, and pancreas. Lower levels of expression are also detected in brain, lung and kidney. Weakly expressed in the adult brain. Expression in fetal brain is higher than in adult brain, with levels similar to several other fetal tissues including spleen and skeletal muscle. In adult brain expressed at low levels in all tissues examined, including the temporal lobe and putamen. Highly expressed in the respiratory and integumentary systems.

The protein resides in the early endosome membrane. The protein localises to the late endosome membrane. Its subcellular location is the recycling endosome membrane. It catalyses the reaction ATP + H2O = ADP + phosphate + H(+). This is Probable cation-transporting ATPase 13A4 (ATP13A4) from Homo sapiens (Human).